Here is a 132-residue protein sequence, read N- to C-terminus: Small ribosomal subunit protein uS8 (132 aa).

This sequence belongs to the universal ribosomal protein uS8 family. Part of the 30S ribosomal subunit. Contacts proteins S5 and S12.

One of the primary rRNA binding proteins, it binds directly to 16S rRNA central domain where it helps coordinate assembly of the platform of the 30S subunit. This chain is Small ribosomal subunit protein uS8, found in Bifidobacterium longum (strain NCC 2705).